Reading from the N-terminus, the 203-residue chain is Thymidine kinase (203 aa).

Residues Ala-9–Thr-16 and Asp-87–Gln-90 contribute to the ATP site. Residue Glu-88 is the Proton acceptor of the active site. Residues Cys-145, Cys-147, Cys-181, and His-184 each contribute to the Zn(2+) site.

It belongs to the thymidine kinase family. In terms of assembly, homotetramer.

The protein resides in the cytoplasm. It catalyses the reaction thymidine + ATP = dTMP + ADP + H(+). The polypeptide is Thymidine kinase (Mesorhizobium japonicum (strain LMG 29417 / CECT 9101 / MAFF 303099) (Mesorhizobium loti (strain MAFF 303099))).